Reading from the N-terminus, the 120-residue chain is UPF0344 protein lmo2265 (120 aa).

4 helical membrane-spanning segments follow: residues 3 to 23 (GYIH…ALLI), 33 to 53 (MLQM…IMMV), 62 to 82 (ILAI…EMLL), and 92 to 112 (GMFL…GFYL).

Belongs to the UPF0344 family.

It localises to the cell membrane. The chain is UPF0344 protein lmo2265 from Listeria monocytogenes serovar 1/2a (strain ATCC BAA-679 / EGD-e).